The following is a 310-amino-acid chain: MKVFAGNSNRHLAEAICKYLNVPLGNATVKRFADQEIFVEISENVRGEDVFIVQSTSFPANDHLMELLIMIDAMRRSSAKRITAVLPYFGYARQDRKAGPRTPISAKLVANLITEAGADRVLTLDLHAGQIQGFFDIPTDNLFAAPILARDVKDHYDTNNVMVVSPDVGGVVRARALSKRLDCLLAIVDKRRDRPGESEVMNVIGDVSGKDCILIDDIIDSGGTLCNAAEALLKKGATSVTAYITHGVLSGGAVARVASSKLRELVITDSIQPTTGVQSAHNIRVVSTAGLLGEAINRTAQEQSVSGLFD.

Residues 34–36 (DQE) and 93–94 (RQ) contribute to the ATP site. The Mg(2+) site is built by His-127 and Asp-167. Lys-190 is a catalytic residue. D-ribose 5-phosphate contacts are provided by residues Arg-192, Asp-216, and 220–224 (DSGGT).

Belongs to the ribose-phosphate pyrophosphokinase family. Class I subfamily. Homohexamer. Mg(2+) is required as a cofactor.

Its subcellular location is the cytoplasm. It catalyses the reaction D-ribose 5-phosphate + ATP = 5-phospho-alpha-D-ribose 1-diphosphate + AMP + H(+). Its pathway is metabolic intermediate biosynthesis; 5-phospho-alpha-D-ribose 1-diphosphate biosynthesis; 5-phospho-alpha-D-ribose 1-diphosphate from D-ribose 5-phosphate (route I): step 1/1. Functionally, involved in the biosynthesis of the central metabolite phospho-alpha-D-ribosyl-1-pyrophosphate (PRPP) via the transfer of pyrophosphoryl group from ATP to 1-hydroxyl of ribose-5-phosphate (Rib-5-P). The sequence is that of Ribose-phosphate pyrophosphokinase from Agrobacterium fabrum (strain C58 / ATCC 33970) (Agrobacterium tumefaciens (strain C58)).